Consider the following 46-residue polypeptide: Peroxidase 1 (46 aa).

This sequence belongs to the peroxidase family. Classical plant (class III) peroxidase subfamily. Heme b is required as a cofactor. Ca(2+) serves as cofactor.

Its subcellular location is the secreted. It carries out the reaction 2 a phenolic donor + H2O2 = 2 a phenolic radical donor + 2 H2O. Its function is as follows. Removal of H(2)O(2), oxidation of toxic reductants, biosynthesis and degradation of lignin, suberization, auxin catabolism, response to environmental stresses such as wounding, pathogen attack and oxidative stress. These functions might be dependent on each isozyme/isoform in each plant tissue. This Catharanthus roseus (Madagascar periwinkle) protein is Peroxidase 1.